Reading from the N-terminus, the 511-residue chain is MTSTPKPLVLIILDGFGHSDIPEHNAIFAANKPVYDRLCATQPHGLISGSGMDVGLPDGQMGNSEVGHMNLGAGRVVYQDFTRVTKAIRDGEFFENPVLTGAVDKAVGAGKAVHILGLLSDGGVHSHQDHLVAMAELAAQRGAEKIYLHAFLDGRDTPPRSAQSSIELLDATFAKLGKGRIASLIGRYYAMDRDNRWDRVSAAYNLIVDSAAEYTADTALAGLEAAYARDESDEFVKATRIGEAVKVEDGDAVIFMNFRADRARELSRAFVEPDFTEFARARLPKMAAYIGLTQYSAKIPAPAAFAPSSLNNVLGEYLAKNGKTQLRIAETEKYAHVTFFFSGGREEPFEGEERILIPSPKVATYDLQPEMSAPEVTDRIVEAIEQQRFDVIVVNYANGDMVGHTGVFEAAVKAVEALDTCVGRIVDALDKVGGEALITADHGNVEQMEDECTGQAHTAHTTEPVPFIYVGKRNVKVREGGVLADVAPTMLKLLGLEKPVEMTGTSILVDA.

Mn(2+) contacts are provided by aspartate 14 and serine 64. Catalysis depends on serine 64, which acts as the Phosphoserine intermediate. Residues histidine 125, 155-156 (RD), arginine 187, arginine 193, 259-262 (RADR), and lysine 333 contribute to the substrate site. Mn(2+) contacts are provided by aspartate 400, histidine 404, aspartate 441, histidine 442, and histidine 460.

It belongs to the BPG-independent phosphoglycerate mutase family. In terms of assembly, monomer. Requires Mn(2+) as cofactor.

The catalysed reaction is (2R)-2-phosphoglycerate = (2R)-3-phosphoglycerate. It functions in the pathway carbohydrate degradation; glycolysis; pyruvate from D-glyceraldehyde 3-phosphate: step 3/5. Catalyzes the interconversion of 2-phosphoglycerate and 3-phosphoglycerate. This Pseudomonas putida (strain ATCC 47054 / DSM 6125 / CFBP 8728 / NCIMB 11950 / KT2440) protein is 2,3-bisphosphoglycerate-independent phosphoglycerate mutase.